A 314-amino-acid polypeptide reads, in one-letter code: Malate dehydrogenase (314 aa).

NAD(+) is bound by residues 11–16 and D35; that span reads GSGNIG. The substrate site is built by R84 and R90. Residues N97 and 120–122 each bind NAD(+); that span reads ITN. 2 residues coordinate substrate: N122 and R153. The active-site Proton acceptor is the H177.

The protein belongs to the LDH/MDH superfamily. MDH type 3 family.

The enzyme catalyses (S)-malate + NAD(+) = oxaloacetate + NADH + H(+). In terms of biological role, catalyzes the reversible oxidation of malate to oxaloacetate. The protein is Malate dehydrogenase of Rickettsia typhi (strain ATCC VR-144 / Wilmington).